Reading from the N-terminus, the 258-residue chain is Acetylglutamate kinase (258 aa).

Substrate is bound by residues 41–42, arginine 63, and asparagine 156; that span reads GG.

The protein belongs to the acetylglutamate kinase family. ArgB subfamily.

The protein localises to the cytoplasm. It carries out the reaction N-acetyl-L-glutamate + ATP = N-acetyl-L-glutamyl 5-phosphate + ADP. It participates in amino-acid biosynthesis; L-arginine biosynthesis; N(2)-acetyl-L-ornithine from L-glutamate: step 2/4. In terms of biological role, catalyzes the ATP-dependent phosphorylation of N-acetyl-L-glutamate. The protein is Acetylglutamate kinase of Geobacillus thermodenitrificans (strain NG80-2).